We begin with the raw amino-acid sequence, 166 residues long: 3-dehydroquinate dehydratase (166 aa).

Tyrosine 22 functions as the Proton acceptor in the catalytic mechanism. Substrate contacts are provided by asparagine 73, histidine 79, and aspartate 86. Histidine 99 functions as the Proton donor in the catalytic mechanism. Substrate-binding positions include 100 to 101 (IT) and arginine 110.

The protein belongs to the type-II 3-dehydroquinase family. As to quaternary structure, homododecamer.

It carries out the reaction 3-dehydroquinate = 3-dehydroshikimate + H2O. It participates in metabolic intermediate biosynthesis; chorismate biosynthesis; chorismate from D-erythrose 4-phosphate and phosphoenolpyruvate: step 3/7. Catalyzes a trans-dehydration via an enolate intermediate. In Wolinella succinogenes (strain ATCC 29543 / DSM 1740 / CCUG 13145 / JCM 31913 / LMG 7466 / NCTC 11488 / FDC 602W) (Vibrio succinogenes), this protein is 3-dehydroquinate dehydratase.